The primary structure comprises 184 residues: UPF0397 protein SAS2570 (184 aa).

5 consecutive transmembrane segments (helical) span residues 11-31, 44-64, 77-97, 111-131, and 148-168; these read VVAI…VVIP, AFLA…TGLV, AWWS…WIGL, MIYF…LIAP, and QGVI…TILL.

It belongs to the UPF0397 family.

The protein resides in the cell membrane. In Staphylococcus aureus (strain MSSA476), this protein is UPF0397 protein SAS2570.